Consider the following 277-residue polypeptide: Pantothenate synthetase (277 aa).

26 to 33 (MGNLHEGH) is an ATP binding site. Catalysis depends on histidine 33, which acts as the Proton donor. Glutamine 57 serves as a coordination point for (R)-pantoate. Glutamine 57 lines the beta-alanine pocket. 144–147 (GKKD) contributes to the ATP binding site. Glutamine 150 is a binding site for (R)-pantoate. ATP-binding positions include valine 173 and 181-184 (LSSR).

This sequence belongs to the pantothenate synthetase family. As to quaternary structure, homodimer.

The protein resides in the cytoplasm. It carries out the reaction (R)-pantoate + beta-alanine + ATP = (R)-pantothenate + AMP + diphosphate + H(+). It participates in cofactor biosynthesis; (R)-pantothenate biosynthesis; (R)-pantothenate from (R)-pantoate and beta-alanine: step 1/1. Its function is as follows. Catalyzes the condensation of pantoate with beta-alanine in an ATP-dependent reaction via a pantoyl-adenylate intermediate. In Paraburkholderia phymatum (strain DSM 17167 / CIP 108236 / LMG 21445 / STM815) (Burkholderia phymatum), this protein is Pantothenate synthetase.